The sequence spans 367 residues: Peptide chain release factor 2 (367 aa).

Gln254 is modified (N5-methylglutamine).

Belongs to the prokaryotic/mitochondrial release factor family. In terms of processing, methylated by PrmC. Methylation increases the termination efficiency of RF2.

Its subcellular location is the cytoplasm. Peptide chain release factor 2 directs the termination of translation in response to the peptide chain termination codons UGA and UAA. This chain is Peptide chain release factor 2, found in Neisseria meningitidis serogroup A / serotype 4A (strain DSM 15465 / Z2491).